The following is a 142-amino-acid chain: Rhinocerosin (142 aa).

A signal peptide spans 1–16 (MMKLYIVFGFIAFSAA). A propeptide spanning residues 17–70 (YVVPEGYYEPEYYPADGYESERVARASPAELIFDEDLADEPEVEEPQYYIRTRR) is cleaved from the precursor. Residues 72-96 (LQPGAPNFPMPGSQLPTSITSNIEK) form a disordered region. Polar residues predominate over residues 85 to 96 (QLPTSITSNIEK).

This sequence belongs to the coleoptericin family. In terms of tissue distribution, strongly expressed in the fat body and the Malpighian tubules, and weakly expressed in hemocytes and midgut.

It is found in the secreted. Has strong antibacterial activity against E.coli, Streptococcus pyogenes, Staphylococcus aureus but not against Pseudomonas aeruginosa. This Oryctes rhinoceros (Coconut rhinoceros beetle) protein is Rhinocerosin.